The chain runs to 277 residues: MSHPEHSPLGKASAYKTQYDPSLLFPIPRQAKRDEIGLAAGSALPFFGIDLWNLYELSWLNLKGKPQVAIGTVIVPADSPNIVESKSFKLYLNTFNQTKVASSEALQQLIHHDLSEACGAPVQVRIVPQEEFARQKMGELAGLSLDRLDVETDVYQPTPGLLHADQDESPVEEVLVSHLLKSNCLVTGQPDWGSVQIRYVGAPINQEGLLKYLISFREHNEFHEQCVERIFMDIQRQCRPVKLAVYARYTRRGGLDINPFRTNFNTPWPDNLRNARQ.

83-85 (VES) provides a ligand contact to substrate. 85 to 86 (SK) serves as a coordination point for NADPH. The active-site Thioimide intermediate is the C184. Catalysis depends on D191, which acts as the Proton donor. 223–224 (HE) lines the substrate pocket. 252–253 (RG) provides a ligand contact to NADPH.

It belongs to the GTP cyclohydrolase I family. QueF type 2 subfamily. Homodimer.

The protein resides in the cytoplasm. The catalysed reaction is 7-aminomethyl-7-carbaguanine + 2 NADP(+) = 7-cyano-7-deazaguanine + 2 NADPH + 3 H(+). It participates in tRNA modification; tRNA-queuosine biosynthesis. Catalyzes the NADPH-dependent reduction of 7-cyano-7-deazaguanine (preQ0) to 7-aminomethyl-7-deazaguanine (preQ1). The chain is NADPH-dependent 7-cyano-7-deazaguanine reductase from Ralstonia nicotianae (strain ATCC BAA-1114 / GMI1000) (Ralstonia solanacearum).